Consider the following 621-residue polypeptide: 1-deoxy-D-xylulose-5-phosphate synthase (621 aa).

Thiamine diphosphate is bound by residues His80 and 121–123 (GHS). Asp152 is a binding site for Mg(2+). Thiamine diphosphate is bound by residues 153 to 154 (GA), Asn181, Tyr288, and Glu370. Residue Asn181 participates in Mg(2+) binding.

This sequence belongs to the transketolase family. DXPS subfamily. Homodimer. The cofactor is Mg(2+). Thiamine diphosphate is required as a cofactor.

The enzyme catalyses D-glyceraldehyde 3-phosphate + pyruvate + H(+) = 1-deoxy-D-xylulose 5-phosphate + CO2. Its pathway is metabolic intermediate biosynthesis; 1-deoxy-D-xylulose 5-phosphate biosynthesis; 1-deoxy-D-xylulose 5-phosphate from D-glyceraldehyde 3-phosphate and pyruvate: step 1/1. Its function is as follows. Catalyzes the acyloin condensation reaction between C atoms 2 and 3 of pyruvate and glyceraldehyde 3-phosphate to yield 1-deoxy-D-xylulose-5-phosphate (DXP). The chain is 1-deoxy-D-xylulose-5-phosphate synthase from Serratia proteamaculans (strain 568).